Here is a 168-residue protein sequence, read N- to C-terminus: Histone doublet miniH2B-H2A (168 aa).

Its subcellular location is the host nucleus. The protein localises to the host cytoplasm. The protein resides in the virion. Functionally, histone-like protein that is recruited to viral factories during viral replication and participates in viral DNA packaging and virion production probably by forming unstable nucleosome-like particles. May compact the viral DNA. This is Histone doublet miniH2B-H2A from Melbournevirus (MelV).